The chain runs to 109 residues: Spermidine export protein MdtI (109 aa).

The next 4 membrane-spanning stretches (helical) occupy residues 6 to 26 (WVHA…NVFL), 36 to 56 (IFGL…SQAV), 64 to 84 (AYAL…WILF), and 88 to 108 (LNRK…MVKL).

This sequence belongs to the drug/metabolite transporter (DMT) superfamily. Small multidrug resistance (SMR) (TC 2.A.7.1) family. MdtI subfamily. In terms of assembly, forms a complex with MdtJ.

It localises to the cell inner membrane. Functionally, catalyzes the excretion of spermidine. The chain is Spermidine export protein MdtI from Escherichia coli O81 (strain ED1a).